We begin with the raw amino-acid sequence, 115 residues long: NADH-ubiquinone oxidoreductase chain 3 (115 aa).

3 helical membrane passes run 3–23, 55–75, and 87–107; these read LVIALLINTGLATILVMVAFW, FFLVAITFLLFDLEIAILLPI, and LLSLSGVLLALLTLGLAYEWL.

The protein belongs to the complex I subunit 3 family. Core subunit of respiratory chain NADH dehydrogenase (Complex I) which is composed of 45 different subunits. Interacts with TMEM186. Interacts with TMEM242.

It is found in the mitochondrion inner membrane. It catalyses the reaction a ubiquinone + NADH + 5 H(+)(in) = a ubiquinol + NAD(+) + 4 H(+)(out). Its function is as follows. Core subunit of the mitochondrial membrane respiratory chain NADH dehydrogenase (Complex I) which catalyzes electron transfer from NADH through the respiratory chain, using ubiquinone as an electron acceptor. Essential for the catalytic activity of complex I. In Ornithorhynchus anatinus (Duckbill platypus), this protein is NADH-ubiquinone oxidoreductase chain 3.